A 159-amino-acid chain; its full sequence is Endoribonuclease YbeY (159 aa).

3 residues coordinate Zn(2+): H125, H129, and H135.

It belongs to the endoribonuclease YbeY family. Zn(2+) is required as a cofactor.

The protein localises to the cytoplasm. Single strand-specific metallo-endoribonuclease involved in late-stage 70S ribosome quality control and in maturation of the 3' terminus of the 16S rRNA. In Brevibacillus brevis (strain 47 / JCM 6285 / NBRC 100599), this protein is Endoribonuclease YbeY.